We begin with the raw amino-acid sequence, 35 residues long: Photosystem II reaction center protein T (35 aa).

Residues 3-23 (ALVYTFLLVSTLGIIFFAIFF) form a helical membrane-spanning segment.

It belongs to the PsbT family. In terms of assembly, PSII is composed of 1 copy each of membrane proteins PsbA, PsbB, PsbC, PsbD, PsbE, PsbF, PsbH, PsbI, PsbJ, PsbK, PsbL, PsbM, PsbT, PsbY, PsbZ, Psb30/Ycf12, at least 3 peripheral proteins of the oxygen-evolving complex and a large number of cofactors. It forms dimeric complexes.

It is found in the plastid. It localises to the chloroplast thylakoid membrane. Found at the monomer-monomer interface of the photosystem II (PS II) dimer, plays a role in assembly and dimerization of PSII. PSII is a light-driven water plastoquinone oxidoreductase, using light energy to abstract electrons from H(2)O, generating a proton gradient subsequently used for ATP formation. This Drimys granadensis protein is Photosystem II reaction center protein T.